We begin with the raw amino-acid sequence, 275 residues long: Large ribosomal subunit protein uL2 (275 aa).

Residues 28–38 (RPYDGLLEKKS) are compositionally biased toward basic and acidic residues. Disordered stretches follow at residues 28 to 58 (RPYD…GGGH) and 223 to 275 (VAMN…RKAK). The segment covering 254–275 (KGHKTRKNKRTDKLIVRRRKAK) has biased composition (basic residues).

It belongs to the universal ribosomal protein uL2 family. As to quaternary structure, part of the 50S ribosomal subunit. Forms a bridge to the 30S subunit in the 70S ribosome.

One of the primary rRNA binding proteins. Required for association of the 30S and 50S subunits to form the 70S ribosome, for tRNA binding and peptide bond formation. It has been suggested to have peptidyltransferase activity; this is somewhat controversial. Makes several contacts with the 16S rRNA in the 70S ribosome. The sequence is that of Large ribosomal subunit protein uL2 from Chromohalobacter salexigens (strain ATCC BAA-138 / DSM 3043 / CIP 106854 / NCIMB 13768 / 1H11).